The following is a 293-amino-acid chain: Glycine--tRNA ligase alpha subunit (293 aa).

Belongs to the class-II aminoacyl-tRNA synthetase family. As to quaternary structure, tetramer of two alpha and two beta subunits.

The protein resides in the cytoplasm. The enzyme catalyses tRNA(Gly) + glycine + ATP = glycyl-tRNA(Gly) + AMP + diphosphate. In Aliarcobacter butzleri (strain RM4018) (Arcobacter butzleri), this protein is Glycine--tRNA ligase alpha subunit.